We begin with the raw amino-acid sequence, 286 residues long: ATP synthase gamma chain (286 aa).

Belongs to the ATPase gamma chain family. In terms of assembly, F-type ATPases have 2 components, CF(1) - the catalytic core - and CF(0) - the membrane proton channel. CF(1) has five subunits: alpha(3), beta(3), gamma(1), delta(1), epsilon(1). CF(0) has three main subunits: a, b and c.

Its subcellular location is the cell inner membrane. Functionally, produces ATP from ADP in the presence of a proton gradient across the membrane. The gamma chain is believed to be important in regulating ATPase activity and the flow of protons through the CF(0) complex. In Shewanella pealeana (strain ATCC 700345 / ANG-SQ1), this protein is ATP synthase gamma chain.